The chain runs to 535 residues: Phosphoenolpyruvate carboxykinase (ATP) (535 aa).

Residues Arg59, Tyr201, and Lys207 each contribute to the substrate site. ATP is bound by residues Lys207, His226, and 243–251 (GLSGTGKTT). Mn(2+) is bound by residues Lys207 and His226. Mn(2+) is bound at residue Asp264. ATP is bound by residues Glu292, Arg328, 444–445 (RI), and Thr450. Residue Arg328 coordinates substrate.

The protein belongs to the phosphoenolpyruvate carboxykinase (ATP) family. It depends on Mn(2+) as a cofactor.

The protein resides in the cytoplasm. The catalysed reaction is oxaloacetate + ATP = phosphoenolpyruvate + ADP + CO2. It participates in carbohydrate biosynthesis; gluconeogenesis. In terms of biological role, involved in the gluconeogenesis. Catalyzes the conversion of oxaloacetate (OAA) to phosphoenolpyruvate (PEP) through direct phosphoryl transfer between the nucleoside triphosphate and OAA. This chain is Phosphoenolpyruvate carboxykinase (ATP), found in Porphyromonas gingivalis (strain ATCC 33277 / DSM 20709 / CIP 103683 / JCM 12257 / NCTC 11834 / 2561).